We begin with the raw amino-acid sequence, 156 residues long: Small ribosomal subunit protein uS7c (156 aa).

It belongs to the universal ribosomal protein uS7 family. As to quaternary structure, part of the 30S ribosomal subunit.

Its subcellular location is the plastid. The protein localises to the chloroplast. In terms of biological role, one of the primary rRNA binding proteins, it binds directly to 16S rRNA where it nucleates assembly of the head domain of the 30S subunit. The chain is Small ribosomal subunit protein uS7c (rps7) from Ostreococcus tauri.